A 351-amino-acid polypeptide reads, in one-letter code: Methylthioribose-1-phosphate isomerase (351 aa).

Substrate is bound by residues 51 to 53, Arg94, and Gln199; that span reads RGA. Asp240 acts as the Proton donor in catalysis. 250–251 contacts substrate; the sequence is NK.

This sequence belongs to the EIF-2B alpha/beta/delta subunits family. MtnA subfamily. In terms of assembly, homodimer.

The enzyme catalyses 5-(methylsulfanyl)-alpha-D-ribose 1-phosphate = 5-(methylsulfanyl)-D-ribulose 1-phosphate. The protein operates within amino-acid biosynthesis; L-methionine biosynthesis via salvage pathway; L-methionine from S-methyl-5-thio-alpha-D-ribose 1-phosphate: step 1/6. Functionally, catalyzes the interconversion of methylthioribose-1-phosphate (MTR-1-P) into methylthioribulose-1-phosphate (MTRu-1-P). The chain is Methylthioribose-1-phosphate isomerase from Bacillus cereus (strain ZK / E33L).